Reading from the N-terminus, the 291-residue chain is 4-hydroxy-tetrahydrodipicolinate synthase (291 aa).

Residue threonine 44 participates in pyruvate binding. Tyrosine 132 acts as the Proton donor/acceptor in catalysis. The active-site Schiff-base intermediate with substrate is lysine 160. Residue isoleucine 202 coordinates pyruvate.

The protein belongs to the DapA family. In terms of assembly, homotetramer; dimer of dimers.

The protein localises to the cytoplasm. It catalyses the reaction L-aspartate 4-semialdehyde + pyruvate = (2S,4S)-4-hydroxy-2,3,4,5-tetrahydrodipicolinate + H2O + H(+). It functions in the pathway amino-acid biosynthesis; L-lysine biosynthesis via DAP pathway; (S)-tetrahydrodipicolinate from L-aspartate: step 3/4. In terms of biological role, catalyzes the condensation of (S)-aspartate-beta-semialdehyde [(S)-ASA] and pyruvate to 4-hydroxy-tetrahydrodipicolinate (HTPA). The protein is 4-hydroxy-tetrahydrodipicolinate synthase of Roseobacter denitrificans (strain ATCC 33942 / OCh 114) (Erythrobacter sp. (strain OCh 114)).